Consider the following 194-residue polypeptide: UPF0215 protein DR_A0167 (194 aa).

Belongs to the UPF0215 family.

The chain is UPF0215 protein DR_A0167 from Deinococcus radiodurans (strain ATCC 13939 / DSM 20539 / JCM 16871 / CCUG 27074 / LMG 4051 / NBRC 15346 / NCIMB 9279 / VKM B-1422 / R1).